A 501-amino-acid chain; its full sequence is Probable Xaa-Pro aminopeptidase pepP (501 aa).

The segment at 1–25 is disordered; that stretch reads MNYHSFLPLRRSSLSHSTTPPSKSR. Residues 12 to 25 are compositionally biased toward polar residues; that stretch reads SSLSHSTTPPSKSR. Residues D298, D309, E432, and E472 each contribute to the Mn(2+) site.

It belongs to the peptidase M24B family. Requires Mn(2+) as cofactor.

The enzyme catalyses Release of any N-terminal amino acid, including proline, that is linked to proline, even from a dipeptide or tripeptide.. Catalyzes the removal of a penultimate prolyl residue from the N-termini of peptides. The sequence is that of Probable Xaa-Pro aminopeptidase pepP (pepP) from Metarhizium acridum (strain CQMa 102).